The chain runs to 81 residues: D-alanyl carrier protein (81 aa).

The 81-residue stretch at 1–81 (MADEAIKNGV…KIIAKVEQAQ (81 aa)) folds into the Carrier domain. S39 carries the post-translational modification O-(pantetheine 4'-phosphoryl)serine.

This sequence belongs to the DltC family. Post-translationally, 4'-phosphopantetheine is transferred from CoA to a specific serine of apo-DCP.

Its subcellular location is the cytoplasm. It functions in the pathway cell wall biogenesis; lipoteichoic acid biosynthesis. Its function is as follows. Carrier protein involved in the D-alanylation of lipoteichoic acid (LTA). The loading of thioester-linked D-alanine onto DltC is catalyzed by D-alanine--D-alanyl carrier protein ligase DltA. The DltC-carried D-alanyl group is further transferred to cell membrane phosphatidylglycerol (PG) by forming an ester bond, probably catalyzed by DltD. D-alanylation of LTA plays an important role in modulating the properties of the cell wall in Gram-positive bacteria, influencing the net charge of the cell wall. This is D-alanyl carrier protein from Lacticaseibacillus casei (strain BL23) (Lactobacillus casei).